A 204-amino-acid chain; its full sequence is dCTP deaminase, dUMP-forming (204 aa).

DCTP contacts are provided by residues 117–122 (RSSLGR), H128, G132, D135, 143–145 (TLE), Q163, Y177, K184, and Q188. The active-site Proton donor/acceptor is E145.

As to quaternary structure, homotrimer. Two trimers assemble into a hexamer by stacking on top of each other. Mg(2+) is required as a cofactor.

It carries out the reaction dCTP + 2 H2O = dUMP + NH4(+) + diphosphate. It functions in the pathway pyrimidine metabolism; dUMP biosynthesis; dUMP from dCTP: step 1/1. With respect to regulation, inhibited by dTTP. Bifunctional enzyme that catalyzes both the deamination of dCTP to dUTP and the hydrolysis of dUTP to dUMP without releasing the toxic dUTP intermediate. It also acts as a dUTP diphosphatase with a lower affinity for dUTP than for dCTP. The chain is dCTP deaminase, dUMP-forming from Methanocaldococcus jannaschii (strain ATCC 43067 / DSM 2661 / JAL-1 / JCM 10045 / NBRC 100440) (Methanococcus jannaschii).